The chain runs to 285 residues: Nucleotide-binding protein PSPTO_4456 (285 aa).

8-15 contacts ATP; that stretch reads GRSGSGKS. Position 60 to 63 (60 to 63) interacts with GTP; the sequence is DARN.

Belongs to the RapZ-like family.

Its function is as follows. Displays ATPase and GTPase activities. The polypeptide is Nucleotide-binding protein PSPTO_4456 (Pseudomonas syringae pv. tomato (strain ATCC BAA-871 / DC3000)).